The chain runs to 231 residues: Urease subunit gamma/beta (231 aa).

A urease gamma region spans residues 1–101 (MLLTPTELER…LVTVHQPIRP (101 aa)). The urease beta stretch occupies residues 102–231 (GQLPLAVMPT…RARAQFFKGA (130 aa)).

In the N-terminal section; belongs to the urease gamma subunit family. The protein in the C-terminal section; belongs to the urease beta subunit family. In terms of assembly, heterohexamer of 3 UreC (alpha) and 3 UreAB (gamma/beta) subunits.

The protein localises to the cytoplasm. The catalysed reaction is urea + 2 H2O + H(+) = hydrogencarbonate + 2 NH4(+). It functions in the pathway nitrogen metabolism; urea degradation; CO(2) and NH(3) from urea (urease route): step 1/1. The chain is Urease subunit gamma/beta from Pseudomonas syringae pv. syringae (strain B728a).